Here is a 191-residue protein sequence, read N- to C-terminus: Signal peptidase IB (191 aa).

At methionine 1–glutamate 7 the chain is on the cytoplasmic side. A helical transmembrane segment spans residues tryptophan 8–threonine 28. Residues proline 29–asparagine 191 are Extracellular-facing. Residues serine 36 and lysine 77 contribute to the active site.

The protein belongs to the peptidase S26 family.

It localises to the cell membrane. It catalyses the reaction Cleavage of hydrophobic, N-terminal signal or leader sequences from secreted and periplasmic proteins.. In terms of biological role, essential for cell viability. In Staphylococcus aureus (strain Mu50 / ATCC 700699), this protein is Signal peptidase IB (spsB).